The following is a 486-amino-acid chain: Glutamyl-tRNA(Gln) amidotransferase subunit A (486 aa).

Catalysis depends on charge relay system residues Lys-79 and Ser-154. The Acyl-ester intermediate role is filled by Ser-178.

Belongs to the amidase family. GatA subfamily. As to quaternary structure, heterotrimer of A, B and C subunits.

It catalyses the reaction L-glutamyl-tRNA(Gln) + L-glutamine + ATP + H2O = L-glutaminyl-tRNA(Gln) + L-glutamate + ADP + phosphate + H(+). Functionally, allows the formation of correctly charged Gln-tRNA(Gln) through the transamidation of misacylated Glu-tRNA(Gln) in organisms which lack glutaminyl-tRNA synthetase. The reaction takes place in the presence of glutamine and ATP through an activated gamma-phospho-Glu-tRNA(Gln). The sequence is that of Glutamyl-tRNA(Gln) amidotransferase subunit A from Dehalococcoides mccartyi (strain ATCC BAA-2266 / KCTC 15142 / 195) (Dehalococcoides ethenogenes (strain 195)).